Here is a 156-residue protein sequence, read N- to C-terminus: Small ribosomal subunit protein uS7 (156 aa).

This sequence belongs to the universal ribosomal protein uS7 family. Part of the 30S ribosomal subunit. Contacts proteins S9 and S11.

Its function is as follows. One of the primary rRNA binding proteins, it binds directly to 16S rRNA where it nucleates assembly of the head domain of the 30S subunit. Is located at the subunit interface close to the decoding center, probably blocks exit of the E-site tRNA. This chain is Small ribosomal subunit protein uS7, found in Clostridium botulinum (strain Kyoto / Type A2).